The primary structure comprises 804 residues: Probable phosphoketolase (804 aa).

The protein belongs to the XFP family. It depends on thiamine diphosphate as a cofactor.

The protein is Probable phosphoketolase of Mycolicibacterium paratuberculosis (strain ATCC BAA-968 / K-10) (Mycobacterium paratuberculosis).